The chain runs to 157 residues: SsrA-binding protein (157 aa).

Belongs to the SmpB family.

The protein resides in the cytoplasm. Required for rescue of stalled ribosomes mediated by trans-translation. Binds to transfer-messenger RNA (tmRNA), required for stable association of tmRNA with ribosomes. tmRNA and SmpB together mimic tRNA shape, replacing the anticodon stem-loop with SmpB. tmRNA is encoded by the ssrA gene; the 2 termini fold to resemble tRNA(Ala) and it encodes a 'tag peptide', a short internal open reading frame. During trans-translation Ala-aminoacylated tmRNA acts like a tRNA, entering the A-site of stalled ribosomes, displacing the stalled mRNA. The ribosome then switches to translate the ORF on the tmRNA; the nascent peptide is terminated with the 'tag peptide' encoded by the tmRNA and targeted for degradation. The ribosome is freed to recommence translation, which seems to be the essential function of trans-translation. The protein is SsrA-binding protein of Christiangramia forsetii (strain DSM 17595 / CGMCC 1.15422 / KT0803) (Gramella forsetii).